The primary structure comprises 177 residues: Large ribosomal subunit protein uL10 (177 aa).

It belongs to the universal ribosomal protein uL10 family. In terms of assembly, part of the ribosomal stalk of the 50S ribosomal subunit. The N-terminus interacts with L11 and the large rRNA to form the base of the stalk. The C-terminus forms an elongated spine to which L12 dimers bind in a sequential fashion forming a multimeric L10(L12)X complex.

Forms part of the ribosomal stalk, playing a central role in the interaction of the ribosome with GTP-bound translation factors. The protein is Large ribosomal subunit protein uL10 of Thermoanaerobacter sp. (strain X514).